Here is a 444-residue protein sequence, read N- to C-terminus: MKKFPEGFLWGVATASYQIEGSPLADGAGMSIWHTFSHTPGNVKNGDTGDVACDHYNRWKEDIEIIEKIGAKAYRFSISWPRILPEGTGKVNQKGLDFYNRIIDTLLEKNITPFITIYHWDLPFSLQLKGGWANRDIADWFAEYSRVLFENFGDRVKHWITLNEPWVVAIVGHLYGVHAPGMKDIYVAFHTVHNLLRAHAKSVKVFRETVKDGKIGIVFNNGYFEPASEREEDIRAARFMHQFNNYPLFLNPIYRGEYPDLVLEFAREYLPRNYEDDMEEIKQEIDFVGLNYYSGHMVKYDPNSPARVSFVERNLPKTAMGWEIVPEGIYWILKGVKEEYNPQEVYITENGAAFDDVVSEGGKVHDQNRIDYLRAHIEQVWRAIQDGVPLKGYFVWSLLDNFEWAEGYSKRFGIVYVDYNTQKRIIKDSGYWYSNVIKNNGLTD.

Residue Glu164 is the Proton donor of the active site. Glu349 (nucleophile) is an active-site residue.

It belongs to the glycosyl hydrolase 1 family. Monomer.

It catalyses the reaction Hydrolysis of (1-&gt;4)-linkages in (1-&gt;4)-beta-D-glucans, to remove successive glucose units.. It carries out the reaction Hydrolysis of terminal, non-reducing beta-D-glucosyl residues with release of beta-D-glucose.. The protein operates within glycan metabolism; cellulose degradation. Its pathway is glycan metabolism; beta-D-glucan degradation. Its activity is regulated as follows. Activated by glucose up to 200 mM when p-nitrophenyl-beta-glucoside is used as the substrate. This activation by end product concentrations may be due to a transglycosylation activity of the enzyme. Functionally, broad substrate specificity glycosidase. Releases glucose from soluble glucooligomers, with a preference for longer oligomers; acts more readily on cellotetraose than on cellobiose. Displays similar activities towards the disaccharides lactose and cellobiose. Is also able to hydrolyze various aryl-beta-glycosides in vitro. This is 1,4-beta-D-glucan glucohydrolase from Thermotoga neapolitana (strain ATCC 49049 / DSM 4359 / NBRC 107923 / NS-E).